The following is a 119-amino-acid chain: Large ribosomal subunit protein uL18 (119 aa).

Belongs to the universal ribosomal protein uL18 family. Part of the 50S ribosomal subunit; part of the 5S rRNA/L5/L18/L25 subcomplex. Contacts the 5S and 23S rRNAs.

This is one of the proteins that bind and probably mediate the attachment of the 5S RNA into the large ribosomal subunit, where it forms part of the central protuberance. In Lactobacillus johnsonii (strain CNCM I-12250 / La1 / NCC 533), this protein is Large ribosomal subunit protein uL18.